The following is a 131-amino-acid chain: MSWQAYVDEHLMCEIEGHHLAAAAIVGHDGAAWAQSTAFPEFKTEDMANIMKDFDEPGHLAPTGLFLGPTKYMVIQGEPGAVIRGKKGSGGITVKKTGQALVVGIYDEPMTPGQCNMVVERLGDYLLEQGM.

Cysteine 13 and cysteine 115 are oxidised to a cystine. The Involved in PIP2 interaction motif lies at alanine 81–threonine 97. Phosphothreonine is present on threonine 111.

The protein belongs to the profilin family. In terms of assembly, occurs in many kinds of cells as a complex with monomeric actin in a 1:1 ratio. Post-translationally, phosphorylated by MAP kinases. Pollen specific.

The protein localises to the cytoplasm. Its subcellular location is the cytoskeleton. Binds to actin and affects the structure of the cytoskeleton. At high concentrations, profilin prevents the polymerization of actin, whereas it enhances it at low concentrations. By binding to PIP2, it inhibits the formation of IP3 and DG. The chain is Profilin-2 (PRO2) from Zea mays (Maize).